Here is a 357-residue protein sequence, read N- to C-terminus: MIIKNTGTSTFIWLPVYFYNEPLNLKLVISIFELLSYILCGYILNLSIYVMSKIQLFHKNLMFLTVPLFAIWYELIIGKFITIAYRLKIVNPGVELGEHTVFWTNDPDKILEVGGSSGLELLIFGGFLQWHTIYSIVFGILAVATERTIASVYIKDYESKKRIWIPIFLIIICQVLAIFMTFIVINRKVHPIIARLPFIFLCPISFAVWLFVKNKNKTLQKEIQNPKRTRIFTLSQQCQVKENLRALRLGTRLVAVVLVYIMVCFLGIVSLTFDLIPGVCGHFVENFLFFHPIPICLTAMFSIPRWKTEFEKSYLPWKYRRNLRKIRQMSMEIEEDSIKKISLETDLYFKQLAESWI.

7 helical membrane-spanning segments follow: residues 28–48, 61–81, 121–141, 165–185, 192–212, 253–273, and 283–303; these read VISI…NLSI, LMFL…GKFI, LLIF…FGIL, IPIF…FIVI, IIAR…WLFV, LVAV…SLTF, and FVEN…MFSI.

The protein belongs to the nematode receptor-like protein sre family.

The protein resides in the membrane. The polypeptide is Serpentine receptor class epsilon-31 (sre-31) (Caenorhabditis elegans).